The chain runs to 165 residues: Phosphopantetheine adenylyltransferase (165 aa).

Ser-11 contacts substrate. ATP-binding positions include 11–12 (SF) and His-19. Lys-43, Thr-76, and Arg-90 together coordinate substrate. ATP-binding positions include 91 to 93 (GIR), Glu-101, and 126 to 132 (FSFISSS).

Belongs to the bacterial CoaD family. Homohexamer. Mg(2+) is required as a cofactor.

The protein resides in the cytoplasm. The enzyme catalyses (R)-4'-phosphopantetheine + ATP + H(+) = 3'-dephospho-CoA + diphosphate. It participates in cofactor biosynthesis; coenzyme A biosynthesis; CoA from (R)-pantothenate: step 4/5. In terms of biological role, reversibly transfers an adenylyl group from ATP to 4'-phosphopantetheine, yielding dephospho-CoA (dPCoA) and pyrophosphate. The sequence is that of Phosphopantetheine adenylyltransferase from Latilactobacillus sakei subsp. sakei (strain 23K) (Lactobacillus sakei subsp. sakei).